The chain runs to 441 residues: ATP-dependent protease ATPase subunit HslU (441 aa).

ATP is bound by residues Ile18, 60 to 65 (GVGKTE), Asp254, Glu319, and Arg391.

Belongs to the ClpX chaperone family. HslU subfamily. In terms of assembly, a double ring-shaped homohexamer of HslV is capped on each side by a ring-shaped HslU homohexamer. The assembly of the HslU/HslV complex is dependent on binding of ATP.

Its subcellular location is the cytoplasm. Functionally, ATPase subunit of a proteasome-like degradation complex; this subunit has chaperone activity. The binding of ATP and its subsequent hydrolysis by HslU are essential for unfolding of protein substrates subsequently hydrolyzed by HslV. HslU recognizes the N-terminal part of its protein substrates and unfolds these before they are guided to HslV for hydrolysis. This Shewanella halifaxensis (strain HAW-EB4) protein is ATP-dependent protease ATPase subunit HslU.